We begin with the raw amino-acid sequence, 354 residues long: MGCTLSAEERAAMERSKAIEKNLKEDGMQAAKDIKLLLLGAGESGKSTIVKQMKIIHEGGFTSEDNKQYKPVVYSNTIQSLVAIIRAMGTLSIPFGDNERESDAKMVLDVIARMEDTEPFSEELLAAMKRLWVDSGVQECLGRANEYQLNDSAKYFLDDLDRLGAKDYMPTEQDILRTRVKTTGIVEVHFSFKNLNFKLFDVGGQRSERKKWIHCFEDVTAIIFCVAMSEYDQVLHEDETTNRMQESLKLFDSICNNKWFTETSIILFLNKKDLFEEKIKKSPLTICFPEYTGKQMYQEASAYIQAQFEAKNKSSAKEIYCHQTCATDTNNIQFVFDAVTDVIIANNLRGCGLY.

Gly2 carries the N-myristoyl glycine lipid modification. The S-palmitoyl cysteine moiety is linked to residue Cys3. The G-alpha domain maps to 32 to 354 (KDIKLLLLGA…ANNLRGCGLY (323 aa)). A G1 motif region spans residues 35–48 (KLLLLGAGESGKST). GTP is bound by residues 40 to 47 (GAGESGKS), 176 to 182 (LRTRVKT), 201 to 205 (DVGGQ), 270 to 273 (NKKD), and Ala326. Mg(2+) contacts are provided by Ser47 and Thr182. The interval 174 to 182 (DILRTRVKT) is G2 motif. The tract at residues 197–206 (FKLFDVGGQR) is G3 motif. Residues 266 to 273 (ILFLNKKD) form a G4 motif region. Residues 324–329 (TCATDT) are G5 motif.

It belongs to the G-alpha family. G(i/o/t/z) subfamily. In terms of assembly, g proteins are composed of 3 units; alpha, beta and gamma. The alpha chain contains the guanine nucleotide binding site.

Functionally, guanine nucleotide-binding proteins (G proteins) are involved as modulators or transducers in various transmembrane signaling systems. The G(o) protein function is not clear. The protein is Guanine nucleotide-binding protein G(o) subunit alpha of Lymnaea stagnalis (Great pond snail).